The sequence spans 224 residues: MQLLKQLFKKKFVKEEHDKKTGQEGMTLLEVIIVLGIMGVVSAGVVTLAQRAIDSQIMTKAAQSLNSIQVALTQTYRGLGNYPATADATAASKLTSGLVSLGKISSDEAKNPFNGTNMNIFSFPRNAAANKAFAISVDGLTQAQCKTLITSVGDMFPYIAIKAGGAVALADLGDFENSAAAAETGVGVIKSIAPASKNLDLTNITHVEKLCKGTAPFGVAFGNS.

Positions 1–25 (MQLLKQLFKKKFVKEEHDKKTGQEG) are cleaved as a propeptide — atypical leader sequence. N-methylmethionine is present on Met26. A helical membrane pass occupies residues 26 to 46 (MTLLEVIIVLGIMGVVSAGVV). Cysteines 145 and 211 form a disulfide.

The protein localises to the fimbrium. Its subcellular location is the membrane. Its function is as follows. Major component of the toxin co-regulated pilus (tcp) which is a type IV pilus essential for bacterial aggregation and subsequent colonization in the host small intestine. This is Toxin coregulated pilin (tcpA) from Vibrio cholerae.